The primary structure comprises 229 residues: Stage III sporulation protein AG (229 aa).

A helical membrane pass occupies residues 30 to 50 (YHYFLFVFVLGVSFMLVSQLF). Disordered regions lie at residues 64–93 (AVSS…KDSI) and 136–159 (SNKN…DQSS). A compositionally biased stretch (basic and acidic residues) spans 71–93 (ADSKEKTAEVFKASKSDKPKDSI).

Its subcellular location is the cell membrane. The polypeptide is Stage III sporulation protein AG (spoIIIAG) (Bacillus subtilis (strain 168)).